A 610-amino-acid chain; its full sequence is Glutamine--fructose-6-phosphate aminotransferase [isomerizing] (610 aa).

Cysteine 2 acts as the Nucleophile; for GATase activity in catalysis. The 218-residue stretch at 2 to 219 folds into the Glutamine amidotransferase type-2 domain; that stretch reads CGIVGYAGKK…SGEWGYFSQN (218 aa). 2 consecutive SIS domains span residues 287 to 431 and 459 to 600; these read SKDV…SDEE and MSSH…PDQP. The active-site For Fru-6P isomerization activity is lysine 605.

Homodimer.

The protein resides in the cytoplasm. It catalyses the reaction D-fructose 6-phosphate + L-glutamine = D-glucosamine 6-phosphate + L-glutamate. Functionally, catalyzes the first step in hexosamine metabolism, converting fructose-6P into glucosamine-6P using glutamine as a nitrogen source. The sequence is that of Glutamine--fructose-6-phosphate aminotransferase [isomerizing] from Leptospira interrogans serogroup Icterohaemorrhagiae serovar copenhageni (strain Fiocruz L1-130).